The chain runs to 446 residues: MDASGVIDELKHRKEAFVTGHSGSSIADLRDVTLAGIFSNAAWIYVVSNNPSYRDSFWLDFLLNWMGLLCSVTVFGENPFLTGILGLSAVLLFGCISKGSKRETIKETVMDNGNQSATLTVYRSTMLILTSIAILAVDFPIFPRKYAKVETWGISLMDLGVGSFVFSNGIISYKRLKSGTELSKWAKIKQSLRSTVVLVVLGFIRLFSVKAVNYQEHATEYGIHWNFFFTLSLLPLAMIIFDFYNMRLRFVIGLIAAIIYELCLIYHPTFLDYLLNAERIDFISANREGIFSFVGYCIIYLAGQQVGSMFFPISRNPMQLLWKLVALSIFSSAISYVLLHYHPLQVSRRFASIGYSSMVISFNLLILTFDQLIVECLTSKPRVPKTYRAVNGNGMLVFLISNVTTGMVNFTFNTLDSPPYKAMAILTVYALFLAVFALKVPFKLKF.

The next 3 helical transmembrane spans lie at 32-52, 56-75, and 76-94; these read VTLA…NNPS, SFWL…VTVF, and GENP…LLFG. A glycan (N-linked (GlcNAc...) asparagine) is linked at Asn-114. The next 10 helical transmembrane spans lie at 122 to 142, 151 to 171, 194 to 214, 221 to 241, 250 to 270, 293 to 313, 320 to 340, 350 to 370, 395 to 415, and 422 to 442; these read YRST…FPIF, TWGI…NGII, STVV…AVNY, YGIH…MIIF, FVIG…HPTF, FVGY…FFPI, LLWK…VLLH, FASI…LTFD, MLVF…FNTL, and AMAI…KVPF.

It belongs to the PIGW family.

Its subcellular location is the endoplasmic reticulum membrane. It participates in glycolipid biosynthesis; glycosylphosphatidylinositol-anchor biosynthesis. Its function is as follows. Probable acetyltransferase, which acetylates the inositol ring of phosphatidylinositol during biosynthesis of GPI-anchor. This chain is GPI-anchored wall transfer protein 1 (GWT1), found in Kluyveromyces lactis (strain ATCC 8585 / CBS 2359 / DSM 70799 / NBRC 1267 / NRRL Y-1140 / WM37) (Yeast).